Consider the following 119-residue polypeptide: Ribonuclease P protein component (119 aa).

Belongs to the RnpA family. In terms of assembly, consists of a catalytic RNA component (M1 or rnpB) and a protein subunit.

The catalysed reaction is Endonucleolytic cleavage of RNA, removing 5'-extranucleotides from tRNA precursor.. RNaseP catalyzes the removal of the 5'-leader sequence from pre-tRNA to produce the mature 5'-terminus. It can also cleave other RNA substrates such as 4.5S RNA. The protein component plays an auxiliary but essential role in vivo by binding to the 5'-leader sequence and broadening the substrate specificity of the ribozyme. This is Ribonuclease P protein component from Histophilus somni (strain 129Pt) (Haemophilus somnus).